A 264-amino-acid polypeptide reads, in one-letter code: Thiazole synthase (264 aa).

The active-site Schiff-base intermediate with DXP is the Lys106. 1-deoxy-D-xylulose 5-phosphate is bound by residues Gly167, 193–194 (AG), and 215–216 (NS).

The protein belongs to the ThiG family. As to quaternary structure, homotetramer. Forms heterodimers with either ThiH or ThiS.

Its subcellular location is the cytoplasm. It carries out the reaction [ThiS sulfur-carrier protein]-C-terminal-Gly-aminoethanethioate + 2-iminoacetate + 1-deoxy-D-xylulose 5-phosphate = [ThiS sulfur-carrier protein]-C-terminal Gly-Gly + 2-[(2R,5Z)-2-carboxy-4-methylthiazol-5(2H)-ylidene]ethyl phosphate + 2 H2O + H(+). Its pathway is cofactor biosynthesis; thiamine diphosphate biosynthesis. In terms of biological role, catalyzes the rearrangement of 1-deoxy-D-xylulose 5-phosphate (DXP) to produce the thiazole phosphate moiety of thiamine. Sulfur is provided by the thiocarboxylate moiety of the carrier protein ThiS. In vitro, sulfur can be provided by H(2)S. This is Thiazole synthase from Pseudomonas putida (strain W619).